Consider the following 1057-residue polypeptide: mRNA export factor elf1 (1057 aa).

ABC transporter domains are found at residues 440-659 (IEEE…VKPE) and 692-1019 (LKMT…KKKL). Residues 477-484 (GHNGCGKS) and 726-733 (GPNGAGKS) each bind ATP. Phosphoserine is present on Ser-733. The region spanning 820–869 (RRVEALIGRQKLKKSFQYEIKWFGKPHKYNTWVSREILLENGFQKFVQAF) is the Chromo domain. Residues 1020-1036 (TRNEIKAKERRAREREL) are compositionally biased toward basic and acidic residues. The tract at residues 1020-1057 (TRNEIKAKERRARERELAWLQSPKGTEKPKSFFSDDEE) is disordered. Phosphoserine occurs at positions 1041 and 1053.

The protein belongs to the ABC transporter superfamily. ABCF family. EF3 subfamily.

The protein localises to the cytoplasm. The protein resides in the nucleus. In terms of biological role, has a direct role in the mRNA export process. Appears to act within the rae1 mediated mRNA export pathway. In Schizosaccharomyces pombe (strain 972 / ATCC 24843) (Fission yeast), this protein is mRNA export factor elf1 (elf1).